We begin with the raw amino-acid sequence, 74 residues long: Putative ribosome-binding protein YbzG (74 aa).

The sequence is that of Putative ribosome-binding protein YbzG (ybzG) from Bacillus subtilis (strain 168).